Consider the following 87-residue polypeptide: Small ribosomal subunit protein uS17 (87 aa).

The protein belongs to the universal ribosomal protein uS17 family. In terms of assembly, part of the 30S ribosomal subunit.

One of the primary rRNA binding proteins, it binds specifically to the 5'-end of 16S ribosomal RNA. The protein is Small ribosomal subunit protein uS17 of Neisseria meningitidis serogroup C (strain 053442).